A 2167-amino-acid chain; its full sequence is Beige protein homolog 1 (2167 aa).

Residues 1368-1499 form the BEACH-type PH domain; the sequence is KDNDSIATIW…VRDDVLRVLN (132 aa). Positions 1545–1839 constitute a BEACH domain; sequence SANNSLIDGF…QIFQEPHPEK (295 aa). Lys1667 is covalently cross-linked (Glycyl lysine isopeptide (Lys-Gly) (interchain with G-Cter in ubiquitin)). 5 WD repeats span residues 1927–1965, 1976–2015, 2017–2054, 2072–2111, and 2129–2167; these read THMA…HSVS, GHLC…LVRQ, TNDA…YTSK, KLDA…HNEW, and SIKG…AIWY.

It localises to the cytoplasm. The protein resides in the membrane. May be involved in protein sorting and cell wall formation. The sequence is that of Beige protein homolog 1 (BPH1) from Saccharomyces cerevisiae (strain ATCC 204508 / S288c) (Baker's yeast).